Consider the following 183-residue polypeptide: Nodulation protein L (183 aa).

This sequence belongs to the transferase hexapeptide repeat family.

Functionally, acetyltransferase implicated in the O-acetylation of Nod factors. The polypeptide is Nodulation protein L (nodL) (Rhizobium meliloti (strain 1021) (Ensifer meliloti)).